The sequence spans 391 residues: MIKRIAILGSTGSIGRQTLEVVDRSEGRLTVQALAAGSNWKELLAQIEIYRPRLAAMMETEAAERLAEALWERGLPIPVVTGEAGLAEAACLPEVDTVVTAVSGAIGLGPTMAAIEAGKEIALANKETLVAAGPLVMAAARRREVTILPVDSEHSAIFQCLQGQDRRLARLILTASGGPFRDKSLEALHQVTPEDALRHPNWRMGPKITIDSASLMNKGLEVIEARWLFDIDFDDIEVLIHPQSIVHSMVEFADGSILSQMGLPDMRLPIQYALTYPERWQTGWPRLDITKTAALTFRRPDLERFPSLELAITAGRTGGSLPAVMNAANEVAVHAFLDHRIGFMDIPRIVREAMEAHEWQKEPDLPAIRQADAWARRFATERVGEGREVSA.

Thr11, Gly12, Ser13, Ile14, Gly37, Asn39, and Asn125 together coordinate NADPH. Lys126 is a binding site for 1-deoxy-D-xylulose 5-phosphate. Glu127 serves as a coordination point for NADPH. Mn(2+) is bound at residue Asp151. 1-deoxy-D-xylulose 5-phosphate is bound by residues Ser152, Glu153, Ser176, and His199. Glu153 is a Mn(2+) binding site. Residue Gly205 coordinates NADPH. The 1-deoxy-D-xylulose 5-phosphate site is built by Ser212, Asn217, Lys218, and Glu221. A Mn(2+)-binding site is contributed by Glu221.

The protein belongs to the DXR family. The cofactor is Mg(2+). Mn(2+) is required as a cofactor.

The enzyme catalyses 2-C-methyl-D-erythritol 4-phosphate + NADP(+) = 1-deoxy-D-xylulose 5-phosphate + NADPH + H(+). It functions in the pathway isoprenoid biosynthesis; isopentenyl diphosphate biosynthesis via DXP pathway; isopentenyl diphosphate from 1-deoxy-D-xylulose 5-phosphate: step 1/6. Catalyzes the NADPH-dependent rearrangement and reduction of 1-deoxy-D-xylulose-5-phosphate (DXP) to 2-C-methyl-D-erythritol 4-phosphate (MEP). This is 1-deoxy-D-xylulose 5-phosphate reductoisomerase from Heliobacterium modesticaldum (strain ATCC 51547 / Ice1).